The sequence spans 761 residues: Protein ACTIVITY OF BC1 COMPLEX KINASE 8, chloroplastic (761 aa).

The N-terminal 57 residues, M1–A57, are a transit peptide targeting the chloroplast. In terms of domain architecture, Protein kinase spans R288–R648. ATP contacts are provided by residues I294–V302 and K315. D452 (proton acceptor) is an active-site residue. The helical transmembrane segment at P725–I745 threads the bilayer.

It belongs to the protein kinase superfamily. ADCK protein kinase family. Mostly expressed in leaves and flowers, and, to a lower extent, in stems, siliques and roots.

The protein localises to the plastid. It is found in the chloroplast envelope. The protein resides in the chloroplast membrane. It catalyses the reaction L-seryl-[protein] + ATP = O-phospho-L-seryl-[protein] + ADP + H(+). The catalysed reaction is L-threonyl-[protein] + ATP = O-phospho-L-threonyl-[protein] + ADP + H(+). Involved in resistance to oxidative stress (e.g. hydrogen peroxide H(2)O(2)), high light and heavy metals (e.g. cadmium ions Cd(2+)). Influences responses to reactive oxygen species (ROS) production. Together with SIA1, regulates iron distribution within the chloroplast and mediates the oxidative stress response. Together with ABC1K7, influences chloroplast lipid synthesis/accumulation and modulates chloroplast membrane composition in response to stress. The protein is Protein ACTIVITY OF BC1 COMPLEX KINASE 8, chloroplastic of Arabidopsis thaliana (Mouse-ear cress).